A 325-amino-acid chain; its full sequence is Mitochondrial citrate transporter C (325 aa).

Solcar repeat units lie at residues 15-105 (ASPA…YKQM), 117-208 (KATF…LKAF), and 221-310 (LPSY…LKGK). The next 6 helical transmembrane spans lie at 21-41 (LIAG…LDTI), 82-102 (GAVL…YESY), 121-141 (LAGL…MEVV), 187-207 (TALR…ELKA), 221-241 (LPSY…PFSN), and 282-303 (FYKG…TFTV).

The protein belongs to the mitochondrial carrier (TC 2.A.29) family.

The protein localises to the mitochondrion inner membrane. Functionally, mitochondrial transporter that does not mediate citrate export from mitochondria to cytoplasm. Its exact function has still to be determined. This is Mitochondrial citrate transporter C from Aspergillus niger (strain ATCC 1015 / CBS 113.46 / FGSC A1144 / LSHB Ac4 / NCTC 3858a / NRRL 328 / USDA 3528.7).